Consider the following 333-residue polypeptide: Holliday junction branch migration complex subunit RuvB (333 aa).

Residues 1 to 181 form a large ATPase domain (RuvB-L) region; it reads MNDILNKEPM…FGISSHMEYY (181 aa). ATP is bound by residues leucine 20, arginine 21, glycine 62, lysine 65, threonine 66, threonine 67, 128–130, arginine 171, tyrosine 181, and arginine 218; that span reads EDF. Threonine 66 is a Mg(2+) binding site. Positions 182 to 252 are small ATPAse domain (RuvB-S); the sequence is QERDLEEIVK…ITDKALSILD (71 aa). The head domain (RuvB-H) stretch occupies residues 255–333; it reads AAGLDYIDQK…HLGYVYNEED (79 aa). Residues arginine 291, arginine 310, and arginine 315 each coordinate DNA.

The protein belongs to the RuvB family. As to quaternary structure, homohexamer. Forms an RuvA(8)-RuvB(12)-Holliday junction (HJ) complex. HJ DNA is sandwiched between 2 RuvA tetramers; dsDNA enters through RuvA and exits via RuvB. An RuvB hexamer assembles on each DNA strand where it exits the tetramer. Each RuvB hexamer is contacted by two RuvA subunits (via domain III) on 2 adjacent RuvB subunits; this complex drives branch migration. In the full resolvosome a probable DNA-RuvA(4)-RuvB(12)-RuvC(2) complex forms which resolves the HJ.

It is found in the cytoplasm. It carries out the reaction ATP + H2O = ADP + phosphate + H(+). Its function is as follows. The RuvA-RuvB-RuvC complex processes Holliday junction (HJ) DNA during genetic recombination and DNA repair, while the RuvA-RuvB complex plays an important role in the rescue of blocked DNA replication forks via replication fork reversal (RFR). RuvA specifically binds to HJ cruciform DNA, conferring on it an open structure. The RuvB hexamer acts as an ATP-dependent pump, pulling dsDNA into and through the RuvAB complex. RuvB forms 2 homohexamers on either side of HJ DNA bound by 1 or 2 RuvA tetramers; 4 subunits per hexamer contact DNA at a time. Coordinated motions by a converter formed by DNA-disengaged RuvB subunits stimulates ATP hydrolysis and nucleotide exchange. Immobilization of the converter enables RuvB to convert the ATP-contained energy into a lever motion, pulling 2 nucleotides of DNA out of the RuvA tetramer per ATP hydrolyzed, thus driving DNA branch migration. The RuvB motors rotate together with the DNA substrate, which together with the progressing nucleotide cycle form the mechanistic basis for DNA recombination by continuous HJ branch migration. Branch migration allows RuvC to scan DNA until it finds its consensus sequence, where it cleaves and resolves cruciform DNA. The sequence is that of Holliday junction branch migration complex subunit RuvB from Lactococcus lactis subsp. lactis (strain IL1403) (Streptococcus lactis).